Here is a 1414-residue protein sequence, read N- to C-terminus: Alpha-(1-&gt;3)-arabinofuranosyltransferase (1414 aa).

Transmembrane regions (helical) follow at residues 57-77 (YLFP…PGWV), 81-101 (LWWA…AEAL), 128-148 (AISS…PVIL), 167-187 (VALM…AAVI), 203-223 (AWWL…LLML), 273-293 (STTA…GLAL), 302-322 (LITM…GGLG), 352-372 (LPLA…GSAP), and 389-409 (VAVA…AWTA). In terms of domain architecture, F5/8 type C spans 687 to 845 (YPSDGADLVY…QYDASGFAHP (159 aa)). The next 4 membrane-spanning stretches (helical) occupy residues 1253 to 1273 (VGLI…LIPV), 1297 to 1317 (ALVA…GAAM), 1333 to 1353 (VWDN…GSVL), and 1364 to 1384 (YVGH…FLAA). The tract at residues 1393 to 1414 (PEPSEDGRSAKPEHTGASAHAG) is disordered. The span at 1394–1406 (EPSEDGRSAKPEH) shows a compositional bias: basic and acidic residues.

The protein localises to the membrane. The catalysed reaction is Adds an alpha-D-arabinofuranosyl group from trans,octacis-decaprenylphospho-beta-D-arabinofuranose at the 3-O-position of an alpha-(1-&gt;5)-arabinofuranan chain attached to a beta-(1-&gt;5)-galactofuranan chain.. The protein operates within cell wall biogenesis; cell wall polysaccharide biosynthesis. Functionally, involved in the biosynthesis of the arabinogalactan (AG) region of the mycolylarabinogalactan-peptidoglycan (mAGP) complex, an essential component of the mycobacterial cell wall. Catalyzes the addition of an arabinofuranosyl (Araf) residue from the sugar donor decaprenyl-phospho-arabinose (DPA) on the C-3 of an alpha-(1-&gt;5)-linked Araf from the arabinan backbone of AG. The chain is Alpha-(1-&gt;3)-arabinofuranosyltransferase (aftD) from Mycolicibacterium smegmatis (strain ATCC 700084 / mc(2)155) (Mycobacterium smegmatis).